The sequence spans 246 residues: Sec-independent protein translocase protein TatB (246 aa).

A helical transmembrane segment spans residues 1-21; that stretch reads MFDIGWSELLVIAVVLIVVVG. 3 disordered regions span residues 94–122, 179–204, and 225–246; these read SDLQKATSPSDGLSSTAAPATSEPVAPLV, SRSKAVATPETTVATNASEPASPKPT, and VADAKPAKAARTKAAKPKKDEA. Polar residues-rich tracts occupy residues 97–112 and 187–197; these read QKATSPSDGLSSTAAP and PETTVATNASE.

Belongs to the TatB family. The Tat system comprises two distinct complexes: a TatABC complex, containing multiple copies of TatA, TatB and TatC subunits, and a separate TatA complex, containing only TatA subunits. Substrates initially bind to the TatABC complex, which probably triggers association of the separate TatA complex to form the active translocon.

It localises to the cell inner membrane. Its function is as follows. Part of the twin-arginine translocation (Tat) system that transports large folded proteins containing a characteristic twin-arginine motif in their signal peptide across membranes. Together with TatC, TatB is part of a receptor directly interacting with Tat signal peptides. TatB may form an oligomeric binding site that transiently accommodates folded Tat precursor proteins before their translocation. The polypeptide is Sec-independent protein translocase protein TatB (Agrobacterium fabrum (strain C58 / ATCC 33970) (Agrobacterium tumefaciens (strain C58))).